The sequence spans 198 residues: V-type proton ATPase subunit E (198 aa).

The protein belongs to the V-ATPase E subunit family.

Produces ATP from ADP in the presence of a proton gradient across the membrane. This is V-type proton ATPase subunit E from Borrelia recurrentis (strain A1).